Reading from the N-terminus, the 134-residue chain is Ribulose bisphosphate carboxylase small subunit (134 aa).

It belongs to the RuBisCO small chain family. In terms of assembly, heterohexadecamer of 8 large and 8 small subunits.

In terms of biological role, ruBisCO catalyzes two reactions: the carboxylation of D-ribulose 1,5-bisphosphate, the primary event in carbon dioxide fixation, as well as the oxidative fragmentation of the pentose substrate. Both reactions occur simultaneously and in competition at the same active site. Although the small subunit is not catalytic it is essential for maximal activity. This is Ribulose bisphosphate carboxylase small subunit from Bradyrhizobium diazoefficiens (strain JCM 10833 / BCRC 13528 / IAM 13628 / NBRC 14792 / USDA 110).